The sequence spans 108 residues: Large ribosomal subunit protein uL23 (108 aa).

It belongs to the universal ribosomal protein uL23 family. Part of the 50S ribosomal subunit. Contacts protein L29, and trigger factor when it is bound to the ribosome.

Functionally, one of the early assembly proteins it binds 23S rRNA. One of the proteins that surrounds the polypeptide exit tunnel on the outside of the ribosome. Forms the main docking site for trigger factor binding to the ribosome. The polypeptide is Large ribosomal subunit protein uL23 (Albidiferax ferrireducens (strain ATCC BAA-621 / DSM 15236 / T118) (Rhodoferax ferrireducens)).